Here is a 114-residue protein sequence, read N- to C-terminus: T cell receptor beta variable 10-2 (114 aa).

Positions 1–21 (MGTRLFFYVALCLLWAGHRDA) are cleaved as a signal peptide. Positions 22 to 114 (GITQSPRYKI…TSVYFCASSE (93 aa)) constitute an Ig-like domain. A disulfide bridge connects residues C42 and C110.

As to quaternary structure, alpha-beta TR is a heterodimer composed of an alpha and beta chain; disulfide-linked. The alpha-beta TR is associated with the transmembrane signaling CD3 coreceptor proteins to form the TR-CD3 (TcR or TCR). The assembly of alpha-beta TR heterodimers with CD3 occurs in the endoplasmic reticulum where a single alpha-beta TR heterodimer associates with one CD3D-CD3E heterodimer, one CD3G-CD3E heterodimer and one CD247 homodimer forming a stable octameric structure. CD3D-CD3E and CD3G-CD3E heterodimers preferentially associate with TR alpha and TR beta chains, respectively. The association of the CD247 homodimer is the last step of TcR assembly in the endoplasmic reticulum and is required for transport to the cell surface.

It is found in the cell membrane. Functionally, v region of the variable domain of T cell receptor (TR) beta chain that participates in the antigen recognition. Alpha-beta T cell receptors are antigen specific receptors which are essential to the immune response and are present on the cell surface of T lymphocytes. Recognize peptide-major histocompatibility (MH) (pMH) complexes that are displayed by antigen presenting cells (APC), a prerequisite for efficient T cell adaptive immunity against pathogens. Binding of alpha-beta TR to pMH complex initiates TR-CD3 clustering on the cell surface and intracellular activation of LCK that phosphorylates the ITAM motifs of CD3G, CD3D, CD3E and CD247 enabling the recruitment of ZAP70. In turn ZAP70 phosphorylates LAT, which recruits numerous signaling molecules to form the LAT signalosome. The LAT signalosome propagates signal branching to three major signaling pathways, the calcium, the mitogen-activated protein kinase (MAPK) kinase and the nuclear factor NF-kappa-B (NF-kB) pathways, leading to the mobilization of transcription factors that are critical for gene expression and essential for T cell growth and differentiation. The T cell repertoire is generated in the thymus, by V-(D)-J rearrangement. This repertoire is then shaped by intrathymic selection events to generate a peripheral T cell pool of self-MH restricted, non-autoaggressive T cells. Post-thymic interaction of alpha-beta TR with the pMH complexes shapes TR structural and functional avidity. The chain is T cell receptor beta variable 10-2 from Homo sapiens (Human).